We begin with the raw amino-acid sequence, 181 residues long: Inner membrane-spanning protein YciB (181 aa).

A run of 5 helical transmembrane segments spans residues 3 to 23 (LLFD…FGIY), 54 to 74 (SLAI…PWFI), 81 to 101 (IYWL…KPLI), 119 to 139 (LNLA…YVAY), and 149 to 169 (FKLF…AFYL).

The protein belongs to the YciB family.

The protein localises to the cell inner membrane. Plays a role in cell envelope biogenesis, maintenance of cell envelope integrity and membrane homeostasis. This Legionella pneumophila (strain Corby) protein is Inner membrane-spanning protein YciB.